We begin with the raw amino-acid sequence, 205 residues long: Metal-independent carbonic anhydrase (205 aa).

The N-terminal stretch at 1–24 (MNLFKPRILVLFAATALISGIAIV) is a signal peptide. Positions 106 and 124 each coordinate hydrogencarbonate.

The protein belongs to the iota-class carbonic anhydrase family. In terms of assembly, homotetramer; dimer of dimers. It depends on Does not require a metal cofactor. as a cofactor.

The catalysed reaction is hydrogencarbonate + H(+) = CO2 + H2O. Activity is not affected by EDTA or 2,6-pyridinedicarboxylic acid (PDA). Activity is not affected by addition of most divalent metal ions, except zinc ions which decrease the activity. Inhibited by the iodide ion. Catalyzes the hydration of carbon dioxide (CO2) to bicarbonate (HCO3(-)). Has only very low bicarbonate dehydration activity. May function even in metal-poor environments. The sequence is that of Metal-independent carbonic anhydrase from Nostoc sp. (strain PCC 7120 / SAG 25.82 / UTEX 2576).